Consider the following 663-residue polypeptide: Methionine--tRNA ligase (663 aa).

Positions 10–20 (AYTNGPLHLGH) match the 'HIGH' region motif. Residues Cys-142, Cys-145, Cys-154, and Cys-157 each coordinate Zn(2+). The 'KMSKS' region motif lies at 323–327 (KMSTS). Thr-326 contacts ATP. In terms of domain architecture, tRNA-binding spans 563 to 663 (YFTKVDLRVG…REISLGSKIH (101 aa)).

It belongs to the class-I aminoacyl-tRNA synthetase family. MetG type 1 subfamily. As to quaternary structure, homodimer. Requires Zn(2+) as cofactor.

The protein localises to the cytoplasm. The catalysed reaction is tRNA(Met) + L-methionine + ATP = L-methionyl-tRNA(Met) + AMP + diphosphate. Is required not only for elongation of protein synthesis but also for the initiation of all mRNA translation through initiator tRNA(fMet) aminoacylation. The chain is Methionine--tRNA ligase from Methanococcus vannielii (strain ATCC 35089 / DSM 1224 / JCM 13029 / OCM 148 / SB).